We begin with the raw amino-acid sequence, 170 residues long: Protein SprT (170 aa).

Residues 25–165 enclose the SprT-like domain; it reads SEQFFDRTFA…QYCKGRLEPV (141 aa). His-78 is a Zn(2+) binding site. Glu-79 is a catalytic residue. His-82 provides a ligand contact to Zn(2+).

It belongs to the SprT family. Requires Zn(2+) as cofactor.

The protein resides in the cytoplasm. In Actinobacillus succinogenes (strain ATCC 55618 / DSM 22257 / CCUG 43843 / 130Z), this protein is Protein SprT.